Here is a 613-residue protein sequence, read N- to C-terminus: MPVDDCWLYFPASRGRTFVQTVWVAPTCPNCCWFPGFLPPVPRPPHVPRVLLRGPRGAVLPASRPSKTLPSSSQTPCPTDPCICPPPSTPDSRQEKNTQSELPNKKGQLQKLPTMNGSKDPPGSYDFDLIIIGGGSGGLAAAKEAAKFDKKVLVLDFVTPTPLGTRWGLGGTCVNVGCIPKKLMHQAALLGQALKDSRNYGWKVEDTVKHDWEKMTESVQSHIGSLNWGYRVALREKKVVYENAYGRFIGPHRIVATNNKGKEKIYSAERFLIATGERPRYLGIPGDKEYCISSDDLFSLPYCPGKTLVVGASYVALECAGFLAGIGLDVTVMVRSILLRGFDQDMANKIGEHMEEHGIKFIRQFVPTKIEQIEAGTPGRLRVTAQSTNSEETIEGEFNTVLLAVGRDSCTRTIGLETVGVKINEKTGKIPVTDEEQTNVPYIYAIGDILEGKLELTPVAIQAGRLLAQRLYGGSNVKCDYDNVPTTVFTPLEYGCCGLSEEKAVEKFGEENIEVYHSFFWPLEWTVPSRDNNKCYAKIICNLKDDERVVGFHVLGPNAGEVTQGFAAALKCGLTKQQLDSTIGIHPVCAEIFTTLSVTKRSGGDILQSGCUG.

The tract at residues 58 to 121 is disordered; it reads AVLPASRPSK…LPTMNGSKDP (64 aa). Polar residues predominate over residues 65 to 74; it reads PSKTLPSSSQ. FAD contacts are provided by residues 136–137, 156–157, 172–173, and 177–181; these read SG, DF, TC, and GCIPK. Cys173 and Cys178 are disulfide-bonded. An N6-succinyllysine modification is found at Lys182. Tyr245 carries the phosphotyrosine modification. Residues 245-246 and Thr275 each bind FAD; that span reads YG. NADP(+) is bound by residues Arg280, 312-318, 335-336, Arg340, 340-342, 406-407, and Lys429; these read ASYVALE, RS, RGF, and GR. An FAD-binding site is contributed by Tyr314. FAD is bound by residues Asp448, 455-457, and His586; that span reads ELT. Glu455 contributes to the NADP(+) binding site. His586 functions as the Proton acceptor in the catalytic mechanism. The segment at residues 611 to 612 is a cross-link (cysteinyl-selenocysteine (Cys-Sec)); sequence CU. A non-standard amino acid (selenocysteine) is located at residue Sec612.

The protein belongs to the class-I pyridine nucleotide-disulfide oxidoreductase family. Homodimer. Requires FAD as cofactor. ISGylated.

It is found in the cytoplasm. It catalyses the reaction [thioredoxin]-dithiol + NADP(+) = [thioredoxin]-disulfide + NADPH + H(+). The enzyme catalyses H2O2 + NADPH + H(+) = NADP(+) + 2 H2O. Reduces disulfideprotein thioredoxin (Trx) to its dithiol-containing form. Homodimeric flavoprotein involved in the regulation of cellular redox reactions, growth and differentiation. Contains a selenocysteine residue at the C-terminal active site that is essential for catalysis. Also has reductase activity on hydrogen peroxide (H2O2). The chain is Thioredoxin reductase 1, cytoplasmic from Mus musculus (Mouse).